The sequence spans 216 residues: Ras-related protein Rab-2B (216 aa).

GTP-binding residues include Gly16, Val17, Gly18, Lys19, Ser20, Cys21, and Thr38. Position 20 (Ser20) interacts with Mg(2+). The short motif at 37 to 42 (LTIGVE) is the Switch 1 element. Residues Thr38 and Asp61 each coordinate Mg(2+). The Switch 2 signature appears at 63 to 72 (AGQESFRSIT). Gly64, Asn119, Lys120, Asp122, Ala150, and Lys151 together coordinate GTP. Over residues 189 to 207 (PQQSITSSVGPCSPQQNVS) the composition is skewed to polar residues. The disordered stretch occupies residues 189 to 216 (PQQSITSSVGPCSPQQNVSDIGPDSGCC). Residues Cys215 and Cys216 are each lipidated (S-geranylgeranyl cysteine).

The protein belongs to the small GTPase superfamily. Rab family. In terms of assembly, interacts (in GTP-bound form) with GARIN4 (via N-terminus). Interacts (in GTP-bound form) with GARIN5A. Interacts (in GTP-bound form) with GARIN1B. Interacts with VPS39 and VPS41. The cofactor is Mg(2+).

It is found in the cell membrane. It localises to the endoplasmic reticulum membrane. Its subcellular location is the golgi apparatus membrane. The protein resides in the cytoplasmic vesicle. The protein localises to the secretory vesicle. It is found in the acrosome. It localises to the autophagosome membrane. It catalyses the reaction GTP + H2O = GDP + phosphate + H(+). Its activity is regulated as follows. Regulated by guanine nucleotide exchange factors (GEFs) which promote the exchange of bound GDP for free GTP, GTPase activating proteins (GAPs) which increase the GTP hydrolysis activity, and GDP dissociation inhibitors (GDIs) which inhibit the dissociation of the nucleotide from the GTPase. Functionally, the small GTPases Rab are key regulators of intracellular membrane trafficking, from the formation of transport vesicles to their fusion with membranes. Rabs cycle between active GTP-bound and inactive GDP-bound states. In their active state, drive transport of vesicular carriers from donor organelles to acceptor organelles to regulate the membrane traffic that maintains organelle identity and morphology. Regulates the compacted morphology of the Golgi. Promotes cytosolic DNA-induced innate immune responses. Regulates IFN responses against DNA viruses by regulating the CGAS-STING signaling axis. Together with RAB2A redundantly required for efficient autophagic flux. This Mus musculus (Mouse) protein is Ras-related protein Rab-2B (Rab2b).